Here is a 98-residue protein sequence, read N- to C-terminus: Beta-elicitin cinnamomin (98 aa).

3 disulfides stabilise this stretch: cysteine 3–cysteine 71, cysteine 27–cysteine 56, and cysteine 51–cysteine 95. The Beak-like motif 1 (ligand binding) signature appears at 33-42 (YSMLTATALP). The short motif at 72 to 83 (DLTVPTSGLVLD) is the Beak-like motif 2 (ligand binding) element.

It belongs to the elicitin family.

The protein localises to the secreted. Functionally, induces local and distal defense responses (incompatible hypersensitive reaction) in plants from the solanaceae and cruciferae families. Elicits leaf necrosis and causes the accumulation of pathogenesis-related proteins. Might interact with the lipidic molecules of the plasma membrane. Elicitins are able to load, carry, and transfer sterols between membranes. In Phytophthora cinnamomi (Cinnamon fungus), this protein is Beta-elicitin cinnamomin.